A 325-amino-acid chain; its full sequence is MTLLFDGDRRIKSPALAPAGGDRRARDPIELTIGLVNNMPDSALKATDVQIARLLQQAAPWHVRIRLHCFSLPSIARSPMASSHVAQTYTDIDRLDGLDIDGLIVTGAEPVAARLRDESYWPDLAAIVDWARTNTKTTIWSCLAAHAAVLHLDDIERQRLASKCSGVFDCVKVRDDWLTHGIDAPLQVPHSRLNAVNEPLLAERGYDILTRSAEVGVDIFARTMPSRFVFFQGHPEYDALSLQREYMRDIARYLAGQREDYPRPPRSYFSAESEAVLNTFEIRARARRDPTLAAELPGLTLRPDLAAGHAAKLLFRNWIGYLADG.

C142 (acyl-thioester intermediate) is an active-site residue. Substrate contacts are provided by K163 and S191. Catalysis depends on H234, which acts as the Proton acceptor. Residue E236 is part of the active site. R248 serves as a coordination point for substrate.

Belongs to the MetA family.

It is found in the cytoplasm. It catalyses the reaction L-homoserine + succinyl-CoA = O-succinyl-L-homoserine + CoA. The protein operates within amino-acid biosynthesis; L-methionine biosynthesis via de novo pathway; O-succinyl-L-homoserine from L-homoserine: step 1/1. Functionally, transfers a succinyl group from succinyl-CoA to L-homoserine, forming succinyl-L-homoserine. The polypeptide is Homoserine O-succinyltransferase (Bradyrhizobium japonicum).